Reading from the N-terminus, the 606-residue chain is WD repeat-containing protein 1 (606 aa).

13 WD repeats span residues 4 to 45 (EIKK…LRNI), 48 to 87 (PAVA…IWDT), 93 to 135 (ILKY…LWDT), 138 to 176 (SVGE…FFEG), 180 to 218 (KFKF…IYDG), 224 to 263 (VCAL…IWDV), 270 to 306 (STFP…YLDK), 311 to 351 (KPLR…YWDS), 358 to 408 (SFSG…KLDV), 432 to 474 (LKDQ…VYSI), 480 to 518 (KDEG…VFSV), 523 to 561 (SENN…VWTL), and 566 to 604 (TKVK…EWTI). Lys-28, Lys-81, Lys-95, and Lys-115 each carry N6-acetyllysine. Position 238 is a phosphotyrosine (Tyr-238). At Lys-480 the chain carries N6-acetyllysine.

This sequence belongs to the WD repeat AIP1 family.

The protein localises to the cytoplasm. It is found in the cytoskeleton. It localises to the cell projection. The protein resides in the podosome. Induces disassembly of actin filaments in conjunction with ADF/cofilin family proteins. Enhances cofilin-mediated actin severing. Involved in cytokinesis. Involved in chemotactic cell migration by restricting lamellipodial membrane protrusions. Involved in myocardium sarcomere organization. Required for cardiomyocyte growth and maintenance. Involved in megakaryocyte maturation and platelet shedding. Required for the establishment of planar cell polarity (PCP) during follicular epithelium development and for cell shape changes during PCP; the function seems to implicate cooperation with CFL1 and/or DSTN/ADF. Involved in the generation/maintenance of cortical tension. Involved in assembly and maintenance of epithelial apical cell junctions and plays a role in the organization of the perijunctional actomyosin belt. The protein is WD repeat-containing protein 1 (Wdr1) of Rattus norvegicus (Rat).